The primary structure comprises 63 residues: Cytochrome c oxidase subunit 7C, mitochondrial (63 aa).

A mitochondrion-targeting transit peptide spans 1–16 (MLGHSIRRFTTSVVRR). Topologically, residues 17 to 33 (SHYEEGPGKNLPFSVEN) are mitochondrial matrix. The residue at position 25 (lysine 25) is an N6-acetyllysine; alternate. Residue lysine 25 is modified to N6-succinyllysine; alternate. The helical transmembrane segment at 34–60 (KWTLLVKMCLFFGSAFSVPFLIVRHQL) threads the bilayer. The Mitochondrial intermembrane portion of the chain corresponds to 61 to 63 (LKQ).

This sequence belongs to the cytochrome c oxidase VIIc family. In terms of assembly, component of the cytochrome c oxidase (complex IV, CIV), a multisubunit enzyme composed of 14 subunits. The complex is composed of a catalytic core of 3 subunits MT-CO1, MT-CO2 and MT-CO3, encoded in the mitochondrial DNA, and 11 supernumerary subunits COX4I, COX5A, COX5B, COX6A, COX6B, COX6C, COX7A, COX7B, COX7C, COX8 and NDUFA4, which are encoded in the nuclear genome. The complex exists as a monomer or a dimer and forms supercomplexes (SCs) in the inner mitochondrial membrane with NADH-ubiquinone oxidoreductase (complex I, CI) and ubiquinol-cytochrome c oxidoreductase (cytochrome b-c1 complex, complex III, CIII), resulting in different assemblies (supercomplex SCI(1)III(2)IV(1) and megacomplex MCI(2)III(2)IV(2)). Interacts with RAB5IF.

The protein localises to the mitochondrion inner membrane. It participates in energy metabolism; oxidative phosphorylation. Functionally, component of the cytochrome c oxidase, the last enzyme in the mitochondrial electron transport chain which drives oxidative phosphorylation. The respiratory chain contains 3 multisubunit complexes succinate dehydrogenase (complex II, CII), ubiquinol-cytochrome c oxidoreductase (cytochrome b-c1 complex, complex III, CIII) and cytochrome c oxidase (complex IV, CIV), that cooperate to transfer electrons derived from NADH and succinate to molecular oxygen, creating an electrochemical gradient over the inner membrane that drives transmembrane transport and the ATP synthase. Cytochrome c oxidase is the component of the respiratory chain that catalyzes the reduction of oxygen to water. Electrons originating from reduced cytochrome c in the intermembrane space (IMS) are transferred via the dinuclear copper A center (CU(A)) of subunit 2 and heme A of subunit 1 to the active site in subunit 1, a binuclear center (BNC) formed by heme A3 and copper B (CU(B)). The BNC reduces molecular oxygen to 2 water molecules using 4 electrons from cytochrome c in the IMS and 4 protons from the mitochondrial matrix. The sequence is that of Cytochrome c oxidase subunit 7C, mitochondrial (COX7C) from Macaca fascicularis (Crab-eating macaque).